Consider the following 98-residue polypeptide: NADH-ubiquinone oxidoreductase chain 4L (98 aa).

3 consecutive transmembrane segments (helical) span residues 1 to 21, 29 to 49, and 61 to 81; these read MIPT…GMLT, SLLC…LIAL, and IILL…LVSI.

The protein belongs to the complex I subunit 4L family. In terms of assembly, core subunit of respiratory chain NADH dehydrogenase (Complex I) which is composed of 45 different subunits.

It localises to the mitochondrion inner membrane. The enzyme catalyses a ubiquinone + NADH + 5 H(+)(in) = a ubiquinol + NAD(+) + 4 H(+)(out). Core subunit of the mitochondrial membrane respiratory chain NADH dehydrogenase (Complex I) which catalyzes electron transfer from NADH through the respiratory chain, using ubiquinone as an electron acceptor. Part of the enzyme membrane arm which is embedded in the lipid bilayer and involved in proton translocation. The protein is NADH-ubiquinone oxidoreductase chain 4L (MT-ND4L) of Macaca ochreata subsp. brunnescens (Muna-buton macaque).